Here is a 133-residue protein sequence, read N- to C-terminus: Norrin (133 aa).

An N-terminal signal peptide occupies residues 1 to 24 (MRKHVLAASFSMLSLLVIMGDTDS). Intrachain disulfides connect Cys39–Cys96, Cys55–Cys110, Cys65–Cys126, and Cys69–Cys128. In terms of domain architecture, CTCK spans 39-132 (CMRHHYVDSI…ILSCHCEECN (94 aa)).

As to quaternary structure, homodimer; disulfide-linked. Component of a complex, at least composed of TSPAN12, FZD4, LRP5/6 and norrin (NDP). Binds FZD4 with high affinity. Interacts with LRP6 (via Beta-propellers 1 and 2). As to expression, expressed in the outer nuclear, inner nuclear and ganglion cell layers of the retina, and in fetal and adult brain.

The protein resides in the secreted. Activates the canonical Wnt signaling pathway through FZD4 and LRP5 coreceptor. Plays a central role in retinal vascularization by acting as a ligand for FZD4 that signals via stabilizing beta-catenin (CTNNB1) and activating LEF/TCF-mediated transcriptional programs. Acts in concert with TSPAN12 to activate FZD4 independently of the Wnt-dependent activation of FZD4, suggesting the existence of a Wnt-independent signaling that also promote accumulation the beta-catenin (CTNNB1). May be involved in a pathway that regulates neural cell differentiation and proliferation. Possible role in neuroectodermal cell-cell interaction. The protein is Norrin (NDP) of Homo sapiens (Human).